Here is a 287-residue protein sequence, read N- to C-terminus: 23S rRNA (uridine(2479)-2'-O)-methyltransferase (287 aa).

Residues 210 to 211 (TD), Gly232, and 252 to 254 (IPM) contribute to the S-adenosyl-L-methionine site.

The protein belongs to the class IV-like SAM-binding methyltransferase superfamily. RNA methyltransferase TsnR/AvirB family. In terms of assembly, homodimer.

The enzyme catalyses uridine(2479) in 23S rRNA + S-adenosyl-L-methionine = 2'-O-methyluridine(2479) in 23S rRNA + S-adenosyl-L-homocysteine + H(+). Its function is as follows. Specifically methylates the 2'-O-ribose position of uridine-2479 in 23S ribosomal RNA. Confers resistance to antibiotic avilamycin, an orthosomycin antibiotic. This chain is 23S rRNA (uridine(2479)-2'-O)-methyltransferase (aviRb), found in Streptomyces viridochromogenes.